The sequence spans 227 residues: Hydroxylase/desaturase asaB (227 aa).

The protein belongs to the asaB hydroxylase/desaturase family.

Its pathway is secondary metabolite biosynthesis. In terms of biological role, hydroxylase/desaturase; part of the gene cluster that mediates the biosynthesis of aspergillic acid, a hydroxamic acid-containing pyrazinone with aliphatic side chains that originates from leucine (Leu) and isoleucine (Ile). Aspergillic acid has antibiotic properties and was shown to be lethal to mice. The first step in the pathway is the production of deoxyaspergillic acid via a condensation between the Ile amine and the Leu carboxylic acid, followed by a reductive release from the protein forming the dipeptide aldehyde NH(2)-Leu-Ile-CHO, which could undergo an intermolecular cyclization resulting in a dihydropyrazinone. As the NRPS asaC lacks a condensation domain, it is improbable that it is responsible for condensation of Leu and Ile. One possibility is that asaC acts on a previously condensed dipeptide and functions as a Leu-Ile reductase to yield deoxyaspergillic acid. After asaC forms deoxyaspergillic acid, the cytochrome P450 asaD oxidizes the pyrazinone to the hydroxamic acid-containing bioactive metabolite aspergillic acid. The hydroxylase/desaturase asaB can then convert aspergillic acid to hydroxyaspergillic acid. Both aspergillic acid and hydroxyaspergillic acid can form complexes with iron producing ferriaspergillin analogs. In Aspergillus flavus (strain ATCC 200026 / FGSC A1120 / IAM 13836 / NRRL 3357 / JCM 12722 / SRRC 167), this protein is Hydroxylase/desaturase asaB.